The chain runs to 365 residues: Histidinol-phosphate aminotransferase (365 aa).

The segment at 1-23 is disordered; sequence MSRPVPNPGILDIAPYTPGKSPV. N6-(pyridoxal phosphate)lysine is present on K221.

The protein belongs to the class-II pyridoxal-phosphate-dependent aminotransferase family. Histidinol-phosphate aminotransferase subfamily. In terms of assembly, homodimer. It depends on pyridoxal 5'-phosphate as a cofactor.

The enzyme catalyses L-histidinol phosphate + 2-oxoglutarate = 3-(imidazol-4-yl)-2-oxopropyl phosphate + L-glutamate. It participates in amino-acid biosynthesis; L-histidine biosynthesis; L-histidine from 5-phospho-alpha-D-ribose 1-diphosphate: step 7/9. This Rhodopseudomonas palustris (strain BisB18) protein is Histidinol-phosphate aminotransferase.